The following is a 177-amino-acid chain: MLDAFSRVVVNSDSKAAYVSGSDLQALKTFINDGNKRLDAVNYIVSNSSCIVSDAISGMICENPGLITPGGNCYTNRRMAACLRDGEIILRYVSYALLAGDASVLEDRCLNGLKETYIALGVPTNSTVRAVSIMKAAAVCFISNTASQRKVEVIEGDCSALASEVASYCDRVVAAVS.

Positions 50 and 61 each coordinate phycourobilin. Asn72 carries the N4-methylasparagine modification. (2R,3E)-phycoerythrobilin-binding residues include Cys82 and Cys158.

This sequence belongs to the phycobiliprotein family. In terms of assembly, heterodimer of an alpha and a beta chain. Post-translationally, contains two covalently linked phycoerythrobilin chromophores and one covalently linked phycourobilin chromophore.

The protein localises to the plastid. Its subcellular location is the chloroplast thylakoid membrane. Its function is as follows. Light-harvesting photosynthetic bile pigment-protein from the phycobiliprotein complex. The sequence is that of R-phycoerythrin beta chain (cpeB) from Lophosiphonia boldii (Red alga).